Consider the following 592-residue polypeptide: MMNKLYIGNLSPAVTADDLRQLFGDRKLPLAGQVLLKSGYAFVDYPDQNWAIRAIETLSGKVELHGKIMEVDYSVSKKLRSRRIQIRNIPPHLQWEVLDGLLAEYGTVENVEQVNTDTETAVVNVTYMTREEAKLAIEKLSGHQFEDYSFKISYIPDEEVSSPSPPHRAREQGHGPGSSSQARQIDFPLRILVPTQFVGAIIGKEGLTIKNITKQTQSRVDIHRKENSGAAEKPVTIHATPEGTSEACRMILEIMQKEADETKLAEEVPLKILAHNGFVGRLIGKEGRNLKKIEHETGTKITISSLQDLSIYNPERTITVRGTIEACANAEIEIMKKLREAFENDMLAVNQQANLIPGLNLSALGIFSTGLSVLPPPAGPRGVPPSPPYHPFATHSGYFSSLYPHHHFGPFPHHHSYPEQETVSLFIPTQAVGAIIGKKGAHIKQLARFAGASIKIAPAEGPDVSERMVIITGPPEAQFKAQGRIFGKLKEENFFNPKEEVKLEAHIRVPSSTAGRVIGKGGKTVNELQNLTSAEVIVPRDQTPDENEEVIVRIIGHFFASQTAQRKIREIVQQVKQQEQRYPQGVAPQRSK.

2 consecutive RRM domains span residues 3 to 76 (NKLY…YSVS) and 82 to 157 (RRIQ…YIPD). A Phosphoserine modification is found at S11. The segment at 157–182 (DEEVSSPSPPHRAREQGHGPGSSSQA) is disordered. Phosphoserine occurs at positions 162 and 164. KH domains lie at 186–251 (DFPL…CRMI), 267–334 (EVPL…EIEI), 420–485 (QETV…QGRI), and 502–568 (KLEA…QRKI). T543 is subject to Phosphothreonine.

This sequence belongs to the RRM IMP/VICKZ family. As to quaternary structure, can form homooligomers and heterooligomers with IGF2BP1 and IGF2BP3 in an RNA-dependent manner. Interacts with HNRPD. Interacts with IGF2BP1. Interacts with ELAVL1, DHX9, HNRNPU, MATR3 and PABPC1. In terms of tissue distribution, expressed in oocytes, granulosa cells of small and growing follicles and Leydig cells of the testis (at protein level). Expressed in testis and ovary.

The protein resides in the nucleus. It localises to the cytoplasm. Its subcellular location is the P-body. The protein localises to the stress granule. In terms of biological role, RNA-binding factor that recruits target transcripts to cytoplasmic protein-RNA complexes (mRNPs). This transcript 'caging' into mRNPs allows mRNA transport and transient storage. It also modulates the rate and location at which target transcripts encounter the translational apparatus and shields them from endonuclease attacks or microRNA-mediated degradation. Preferentially binds to N6-methyladenosine (m6A)-containing mRNAs and increases their stability. Binds to the 5'-UTR of the insulin-like growth factor 2 (IGF2) mRNAs. Binding is isoform-specific. Binds to beta-actin/ACTB and MYC transcripts. Increases MYC mRNA stability by binding to the coding region instability determinant (CRD) and binding is enhanced by m6A-modification of the CRD. In Mus musculus (Mouse), this protein is Insulin-like growth factor 2 mRNA-binding protein 2 (Igf2bp2).